A 288-amino-acid chain; its full sequence is ATP synthase gamma chain (288 aa).

The protein belongs to the ATPase gamma chain family. F-type ATPases have 2 components, CF(1) - the catalytic core - and CF(0) - the membrane proton channel. CF(1) has five subunits: alpha(3), beta(3), gamma(1), delta(1), epsilon(1). CF(0) has three main subunits: a, b and c.

It is found in the cell membrane. Its function is as follows. Produces ATP from ADP in the presence of a proton gradient across the membrane. The gamma chain is believed to be important in regulating ATPase activity and the flow of protons through the CF(0) complex. The protein is ATP synthase gamma chain of Staphylococcus saprophyticus subsp. saprophyticus (strain ATCC 15305 / DSM 20229 / NCIMB 8711 / NCTC 7292 / S-41).